The primary structure comprises 1042 residues: Ribosome biogenesis protein NOC1 (1042 aa).

Disordered regions lie at residues 1 to 20 (MGLK…AFDE), 28 to 79 (GKID…AAKD), 101 to 128 (LVAD…SLDQ), 148 to 214 (NRED…IPQD), 546 to 567 (LNGD…GSLT), and 897 to 1020 (GKMT…LKTL). Composition is skewed to basic and acidic residues over residues 9 to 18 (QQRDIGKPAF) and 63 to 79 (HPTE…AAKD). Over residues 118-128 (PKISSEQSLDQ) the composition is skewed to polar residues. Composition is skewed to acidic residues over residues 153-164 (NTEDEASPDEDA) and 173-194 (SDSD…SFSD). Residues 195 to 207 (NEEKVTEKVDSGE) show a composition bias toward basic and acidic residues. Residues 902 to 911 (KRDETKREFG) show a composition bias toward basic and acidic residues. Over residues 937 to 957 (NVDDDSDADLGDFDYSDDEED) the composition is skewed to acidic residues. Low complexity predominate over residues 962–972 (DGSMSDIGMDS). The span at 978 to 994 (IFDDAGESDEQSSGEDE) shows a compositional bias: acidic residues.

Belongs to the CBF/MAK21 family. As to quaternary structure, interacts with NOC2. Forms a nucleolar complex with NOC2 that binds to 90S and 66S pre-ribosomes.

The protein resides in the nucleus. It localises to the nucleolus. Required for 60S ribosomal subunit synthesis. The polypeptide is Ribosome biogenesis protein NOC1 (NOC1) (Chaetomium thermophilum (strain DSM 1495 / CBS 144.50 / IMI 039719) (Thermochaetoides thermophila)).